The sequence spans 206 residues: Dephospho-CoA kinase (206 aa).

The DPCK domain maps to 4 to 204; the sequence is IVGLTGGIGS…QFYLQQAENK (201 aa). Residue 12–17 participates in ATP binding; the sequence is GSGKTT.

It belongs to the CoaE family.

The protein localises to the cytoplasm. It carries out the reaction 3'-dephospho-CoA + ATP = ADP + CoA + H(+). Its pathway is cofactor biosynthesis; coenzyme A biosynthesis; CoA from (R)-pantothenate: step 5/5. Catalyzes the phosphorylation of the 3'-hydroxyl group of dephosphocoenzyme A to form coenzyme A. The polypeptide is Dephospho-CoA kinase (Haemophilus influenzae (strain ATCC 51907 / DSM 11121 / KW20 / Rd)).